Reading from the N-terminus, the 307-residue chain is Pantothenate kinase (307 aa).

Residue 87–94 (GSVAVGKS) participates in ATP binding.

Belongs to the prokaryotic pantothenate kinase family.

The protein localises to the cytoplasm. The catalysed reaction is (R)-pantothenate + ATP = (R)-4'-phosphopantothenate + ADP + H(+). The protein operates within cofactor biosynthesis; coenzyme A biosynthesis; CoA from (R)-pantothenate: step 1/5. This Vibrio vulnificus (strain YJ016) protein is Pantothenate kinase.